Consider the following 2212-residue polypeptide: Voltage-dependent P/Q-type calcium channel subunit alpha-1A (2212 aa).

The Cytoplasmic segment spans residues 1–100 (MARFGDEMPG…KYAKKITEWP (100 aa)). The stretch at 87–365 (NVVRKYAKKI…LVLGVLSGEF (279 aa)) is one I repeat. The helical transmembrane segment at 101–119 (PFEYMILATIIANCIVLAL) threads the bilayer. Residues 120 to 138 (EQHLPDDDKTPMSERLDDT) lie on the Extracellular side of the membrane. A helical membrane pass occupies residues 139–156 (EPYFIGIFCFEAGIKIVA). At 157 to 168 (LGFAFHKGSYLR) the chain is on the cytoplasmic side. A helical transmembrane segment spans residues 169 to 184 (NGWNVMDFVVVLTGIL). The Extracellular portion of the chain corresponds to 185–192 (ATVGTEFD). A helical transmembrane segment spans residues 193 to 211 (LRTLRAVRVLRPLKLVSGI). Over 212–230 (PSLQVVLKSIMKAMIPLLQ) the chain is Cytoplasmic. The chain crosses the membrane as a helical span at residues 231–250 (IGLLLFFAILIFAIIGLEFY). The Extracellular segment spans residues 251–337 (MGKFHTTCFE…NSNDASGNTW (87 aa)). An N-linked (GlcNAc...) asparagine glycan is attached at Asn285. Residue Glu320 coordinates Ca(2+). A helical transmembrane segment spans residues 338 to 362 (NWLYFIPLIIIGSFFMLNLVLGVLS). Residues 363 to 489 (GEFAKERERV…FYIRRMVKTQ (127 aa)) lie on the Cytoplasmic side of the membrane. A binding to the beta subunit region spans residues 385 to 402 (QQIERELNGYMEWISKAE). Thr411 is subject to Phosphothreonine. Phosphoserine occurs at positions 450 and 453. The II repeat unit spans residues 475-719 (ERRMRFYIRR…VFLAIAVDNL (245 aa)). A helical transmembrane segment spans residues 490-509 (AFYWTVLSLVALNTLWLAIV). Residues 510–523 (HYNQPEWLSDFLYY) lie on the Extracellular side of the membrane. The chain crosses the membrane as a helical span at residues 524-543 (AEFIFLGLFMSEMFIKMYGL). Residues 544–551 (GTRPYFHS) are Cytoplasmic-facing. The chain crosses the membrane as a helical span at residues 552 to 570 (SFNCFDCGVIIGSIFEVIW). The Extracellular segment spans residues 571 to 580 (AVIKPGTSFG). The chain crosses the membrane as a helical span at residues 581 to 599 (ISVLRALRLLRIFKVTKYW). The Cytoplasmic segment spans residues 600 to 618 (ASLRNLVVSLLNSMKSIIS). The chain crosses the membrane as a helical span at residues 619–638 (LLFLLFLFIVVFALLGMQLF). Residues 639–691 (GGQFNFDEGTPPTNFDTFPAAIMTVFQILTGEDWNEVMYDEIKSQGGVQGGMV) lie on the Extracellular side of the membrane. A Ca(2+)-binding site is contributed by Glu670. Residues 692 to 716 (FSIYFIVLTLFGNYTLLNVFLAIAV) traverse the membrane as a helical segment. Over 717 to 1190 (DNLANAQELT…TNPLRRLCHY (474 aa)) the chain is Cytoplasmic. Phosphoserine occurs at positions 752, 755, and 792. Basic and acidic residues-rich tracts occupy residues 814-824 (PDVKTHLDRPL), 850-862 (RPRESARDPDARR), 871-924 (APGR…EGEP), and 932-958 (RPGDEPDDRPERRPRPRDATRPARAAD). Disordered regions lie at residues 814–1117 (PDVK…RKPE) and 1137–1170 (VNKNANPDPLPKKEEEKKEEEEADPGEDGPKPMP). Ser1038, Ser1042, and Ser1051 each carry phosphoserine. Residues 1056 to 1073 (GNSTNPGPALATNPQNAA) show a composition bias toward polar residues. Over residues 1074-1083 (SRRTPNNPGN) the composition is skewed to low complexity. The segment covering 1094–1111 (ENSLIVTNPSSTQPNSAK) has biased composition (polar residues). The span at 1153-1163 (KKEEEEADPGE) shows a compositional bias: acidic residues. The stretch at 1182 to 1465 (NPLRRLCHYI…IFVALIIITF (284 aa)) is one III repeat. The chain crosses the membrane as a helical span at residues 1191–1214 (ILNLRYFEMCILMVIAMSSIALAA). Residues 1215 to 1231 (EDPVQPNAPRNNVLRYF) are Extracellular-facing. The helical transmembrane segment at 1232-1251 (DYVFTGVFTFEMVIKMIDLG) threads the bilayer. Over 1252–1258 (LVLHQGA) the chain is Cytoplasmic. A helical membrane pass occupies residues 1259 to 1282 (YFRDLWNILDFIVVSGALVAFAFT). Topologically, residues 1283–1293 (GNSKGKDINTI) are extracellular. The helical transmembrane segment at 1294 to 1311 (KSLRVLRVLRPLKTIKRL) threads the bilayer. Topologically, residues 1312–1330 (PKLKAVFDCVVNSLKNVFN) are cytoplasmic. The helical transmembrane segment at 1331 to 1350 (ILIVYMLFMFIFAVVAVQLF) threads the bilayer. Over 1351–1437 (KGKFFHCTDE…QGPSPGYRME (87 aa)) the chain is Extracellular. Glu1411 lines the Ca(2+) pocket. A helical membrane pass occupies residues 1438 to 1462 (MSIFYVVYFVVFPFFFVNIFVALII). Residues 1463-1518 (ITFQEQGDKMMEEYSLEKNERACIDFAISAKPLTRHMPQNKQSFQYRMWQFVVSPP) lie on the Cytoplasmic side of the membrane. An IV repeat occupies 1502 to 1765 (NKQSFQYRMW…LFVAVIMDNF (264 aa)). A helical membrane pass occupies residues 1519 to 1537 (FEYTIMAMIALNTIVLMMK). At 1538-1551 (FYGASVAYENALRV) the chain is on the extracellular side. A helical transmembrane segment spans residues 1552-1573 (FNIVFTSLFSLECVLKVMAFGI). The Cytoplasmic segment spans residues 1574–1580 (LNYFRDA). The chain crosses the membrane as a helical span at residues 1581–1600 (WNIFDFVTVLGSITDILVTE). Topologically, residues 1601–1607 (FGNNFIN) are extracellular. Asn1607 carries N-linked (GlcNAc...) asparagine glycosylation. The helical transmembrane segment at 1608-1626 (LSFLRLFRAARLIKLLRQG) threads the bilayer. At 1627–1645 (YTIRILLWTFVQSFKALPY) the chain is on the cytoplasmic side. The chain crosses the membrane as a helical span at residues 1646 to 1665 (VCLLIAMLFFIYAIIGMQVF). Over 1666–1737 (GNIGIDGEDE…IQKPECGNEF (72 aa)) the chain is Extracellular. Residues 1738–1763 (AYFYFVSFIFLCSFLMLNLFVAVIMD) form a helical membrane-spanning segment. The Cytoplasmic segment spans residues 1764–2212 (NFEYLTRDSS…EGREHATHRQ (449 aa)). Position 1935 is a phosphothreonine (Thr1935). The disordered stretch occupies residues 1940 to 2212 (QRMEPPSPTQ…EGREHATHRQ (273 aa)). Composition is skewed to polar residues over residues 1948–1963 (TQEGGPSQNALPSTQL) and 1972–1997 (QESSMKESPSWVTQRAQEMFQKTGTW). A phosphoserine mark is found at Ser1998, Ser2016, Ser2028, Ser2030, Ser2071, and Ser2091. Residues 2008 to 2017 (PNSQPNSQSV) show a composition bias toward polar residues. Over residues 2018–2034 (EMREMGTDGYSDSEHYL) the composition is skewed to basic and acidic residues. Polar residues predominate over residues 2064-2073 (LSTISDTSPM). 2 stretches are compositionally biased toward basic and acidic residues: residues 2085-2102 (RRLDDYSLERVPPEENQR) and 2143-2153 (PSKDRDQDRGR). Positions 2154–2172 (PKDRKHRPHHHHHHHHHHP) are enriched in basic residues. A compositionally biased stretch (basic and acidic residues) spans 2173–2212 (PAPDRERYAQERPDTGRARAREQRWSRSPSEGREHATHRQ).

Belongs to the calcium channel alpha-1 subunit (TC 1.A.1.11) family. CACNA1A subfamily. As to quaternary structure, voltage-dependent calcium channels are multisubunit complexes, consisting of alpha-1, alpha-2, beta and delta subunits in a 1:1:1:1 ratio. The channel activity is directed by the pore-forming and voltage-sensitive alpha-1 subunit. In many cases, this subunit is sufficient to generate voltage-sensitive calcium channel activity. The auxiliary subunits beta and alpha-2/delta linked by a disulfide bridge regulate the channel activity. Interacts (via C-terminal CDB motif) with CABP1 in the pre- and postsynaptic membranes. Interacts with the spider omega-agatoxin-IVA (AC P30288). Interacts with TSPOAP1. Brain specific. Purkinje cells contain predominantly P-type VSCC, the Q-type being a prominent calcium current in cerebellar granule cells. Also found in heart, in kidney distal convoluted tubule (DCT), and in pituitary.

The protein resides in the cell membrane. The enzyme catalyses Ca(2+)(in) = Ca(2+)(out). Voltage-sensitive calcium channels (VSCC) mediate the entry of calcium ions into excitable cells and are also involved in a variety of calcium-dependent processes, including muscle contraction, hormone or neurotransmitter release, gene expression, cell motility, cell division and cell death. The isoform alpha-1A gives rise to P and/or Q-type calcium currents. P/Q-type calcium channels belong to the 'high-voltage activated' (HVA) group and are specifically blocked by the spider omega-agatoxin-IVA (AC P30288). They are however insensitive to dihydropyridines (DHP). This Rattus norvegicus (Rat) protein is Voltage-dependent P/Q-type calcium channel subunit alpha-1A.